Here is a 368-residue protein sequence, read N- to C-terminus: Polymerase delta-interacting protein 2 (368 aa).

A mitochondrion-targeting transit peptide spans 1–21; sequence MAGCVARRALAVGSRWWSRSL. The ApaG domain maps to 235–360; it reads RETTENIRVT…FSLESNKDEK (126 aa). Thr292 is subject to Phosphothreonine.

As to quaternary structure, interacts with PCNA and POLD2. Interacts with SSBP1. Interacts with PRIMPOL; leading to enhance DNA polymerase activity of PRIMPOL. Interacts with POLH. Interacts with POLD1; leading to stimulate DNA polymerase activity of POLD1.

It is found in the mitochondrion matrix. Its subcellular location is the nucleus. Its function is as follows. Involved in DNA damage tolerance by regulating translesion synthesis (TLS) of templates carrying DNA damage lesions such as 8oxoG and abasic sites. May act by stimulating activity of DNA polymerases involved in TLS, such as PRIMPOL and polymerase delta (POLD1). The protein is Polymerase delta-interacting protein 2 of Mus musculus (Mouse).